The following is a 219-amino-acid chain: Leucyl/phenylalanyl-tRNA--protein transferase (219 aa).

This sequence belongs to the L/F-transferase family.

The protein resides in the cytoplasm. The catalysed reaction is N-terminal L-lysyl-[protein] + L-leucyl-tRNA(Leu) = N-terminal L-leucyl-L-lysyl-[protein] + tRNA(Leu) + H(+). The enzyme catalyses N-terminal L-arginyl-[protein] + L-leucyl-tRNA(Leu) = N-terminal L-leucyl-L-arginyl-[protein] + tRNA(Leu) + H(+). It carries out the reaction L-phenylalanyl-tRNA(Phe) + an N-terminal L-alpha-aminoacyl-[protein] = an N-terminal L-phenylalanyl-L-alpha-aminoacyl-[protein] + tRNA(Phe). Its function is as follows. Functions in the N-end rule pathway of protein degradation where it conjugates Leu, Phe and, less efficiently, Met from aminoacyl-tRNAs to the N-termini of proteins containing an N-terminal arginine or lysine. This is Leucyl/phenylalanyl-tRNA--protein transferase from Leptospira borgpetersenii serovar Hardjo-bovis (strain JB197).